Consider the following 516-residue polypeptide: NADH-quinone oxidoreductase subunit N (516 aa).

The next 14 membrane-spanning stretches (helical) occupy residues 12–32, 37–57, 81–101, 108–128, 131–151, 163–183, 213–233, 246–266, 274–294, 303–323, 341–361, 386–406, 419–439, and 491–511; these read LLPA…DLLV, VTIS…VLVG, LVAV…GPLL, VGEY…LGAA, LITL…LVGL, VTFF…AALL, VAVA…PFHA, VAAY…LAVV, ITGL…NLVA, LLAW…GALA, VAYT…VVAL, VGLA…AGLF, GAAG…AYYL, and VVLA…QLVL.

It belongs to the complex I subunit 2 family. In terms of assembly, NDH-1 is composed of 14 different subunits. Subunits NuoA, H, J, K, L, M, N constitute the membrane sector of the complex.

The protein resides in the cell membrane. It catalyses the reaction a quinone + NADH + 5 H(+)(in) = a quinol + NAD(+) + 4 H(+)(out). Its function is as follows. NDH-1 shuttles electrons from NADH, via FMN and iron-sulfur (Fe-S) centers, to quinones in the respiratory chain. The immediate electron acceptor for the enzyme in this species is believed to be a menaquinone. Couples the redox reaction to proton translocation (for every two electrons transferred, four hydrogen ions are translocated across the cytoplasmic membrane), and thus conserves the redox energy in a proton gradient. This chain is NADH-quinone oxidoreductase subunit N, found in Salinispora tropica (strain ATCC BAA-916 / DSM 44818 / JCM 13857 / NBRC 105044 / CNB-440).